Reading from the N-terminus, the 360-residue chain is Protein RecA (360 aa).

ATP is bound at residue 69 to 76 (GPESSGKT).

Belongs to the RecA family.

Its subcellular location is the cytoplasm. Its function is as follows. Can catalyze the hydrolysis of ATP in the presence of single-stranded DNA, the ATP-dependent uptake of single-stranded DNA by duplex DNA, and the ATP-dependent hybridization of homologous single-stranded DNAs. It interacts with LexA causing its activation and leading to its autocatalytic cleavage. In Trichodesmium erythraeum (strain IMS101), this protein is Protein RecA.